We begin with the raw amino-acid sequence, 26 residues long: uncharacterized protein (26 aa).

This is an uncharacterized protein from Saccharomyces cerevisiae (strain ATCC 204508 / S288c) (Baker's yeast).